A 616-amino-acid polypeptide reads, in one-letter code: Chaperone protein HscA (616 aa).

Belongs to the heat shock protein 70 family.

Its function is as follows. Chaperone involved in the maturation of iron-sulfur cluster-containing proteins. Has a low intrinsic ATPase activity which is markedly stimulated by HscB. Involved in the maturation of IscU. This chain is Chaperone protein HscA, found in Salmonella paratyphi B (strain ATCC BAA-1250 / SPB7).